We begin with the raw amino-acid sequence, 289 residues long: Acetylglutamate kinase (289 aa).

Substrate is bound by residues 65-66, Arg87, and Asn187; that span reads GG.

This sequence belongs to the acetylglutamate kinase family. ArgB subfamily.

It is found in the cytoplasm. It carries out the reaction N-acetyl-L-glutamate + ATP = N-acetyl-L-glutamyl 5-phosphate + ADP. It participates in amino-acid biosynthesis; L-arginine biosynthesis; N(2)-acetyl-L-ornithine from L-glutamate: step 2/4. Catalyzes the ATP-dependent phosphorylation of N-acetyl-L-glutamate. The sequence is that of Acetylglutamate kinase from Chromobacterium violaceum (strain ATCC 12472 / DSM 30191 / JCM 1249 / CCUG 213 / NBRC 12614 / NCIMB 9131 / NCTC 9757 / MK).